The following is a 145-amino-acid chain: MIIVKLFTCLLMVSSVLTLNDVRYKYYKTEKVGNKCRYNMFSYLENDESIYEDRLCKMYTCHIMEDDALMQHSMCKLPKGFREGCTVESKTGRFPYCCLNRKMSCPPEERNDDFNVVSVKGPKFPRNKSNDKFKNLSVKNCPCLE.

A signal peptide spans Met1–Thr18.

In terms of processing, contains 5 disulfide bonds. As to expression, expressed by the venom gland.

It localises to the secreted. This chain is Venom protein 30.1, found in Lychas mucronatus (Chinese swimming scorpion).